The primary structure comprises 217 residues: Ran-binding protein 1 homolog b (217 aa).

2 disordered regions span residues 1–32 (MASISNEPERENRDEEETGANEDEDTGAQVAP) and 160–217 (ESEE…VPSA). The residue at position 2 (Ala2) is an N-acetylalanine. Residues 14 to 26 (DEEETGANEDEDT) are compositionally biased toward acidic residues. In terms of domain architecture, RanBD1 spans 29-164 (QVAPIVRLEE…FKEVAESEEE (136 aa)). Over residues 181–217 (LTVEEKESEKKPVEKAEENKKSEAVEEKKTEESVPSA) the composition is skewed to basic and acidic residues.

Interacts with the GTP-bound form of RAN1, RAN2 and RAN3.

It is found in the nucleus. The protein localises to the nuclear pore complex. The sequence is that of Ran-binding protein 1 homolog b (RANBP1B) from Arabidopsis thaliana (Mouse-ear cress).